The following is a 173-amino-acid chain: Mitochondrial import inner membrane translocase subunit TIM22-1 (173 aa).

The N-terminal 18 residues, 1–18 (MADSSAAEPTTGASSPPV), are a transit peptide targeting the mitochondrion. Residues 1-26 (MADSSAAEPTTGASSPPVASDENSTQ) are disordered. Helical transmembrane passes span 52-72 (VTSG…LGAL), 101-119 (SCKT…ECIV), 128-144 (TVNT…SMSA), and 151-168 (ACIG…IEKF).

It belongs to the Tim17/Tim22/Tim23 family. Expressed in young cotyledons, roots, flowers and leaves.

It localises to the mitochondrion inner membrane. Functionally, essential core component of the TIM22 complex, a complex that mediates the import and insertion of multi-pass transmembrane proteins into the mitochondrial inner membrane. The protein is Mitochondrial import inner membrane translocase subunit TIM22-1 (TIM22-1) of Arabidopsis thaliana (Mouse-ear cress).